A 286-amino-acid chain; its full sequence is Sulfate transport system permease protein CysT (286 aa).

A run of 7 helical transmembrane segments spans residues 27-47 (WVVT…ALLV), 74-94 (FITA…VAWV), 108-128 (AMVD…LATL), 146-166 (IAFS…PFIV), 195-215 (FWRV…ALGF), 224-244 (SVVL…VLVF), and 257-276 (VIGA…INLL). In terms of domain architecture, ABC transmembrane type-1 spans 70–273 (YNVTFITALA…SVSLILLLII (204 aa)).

The protein belongs to the binding-protein-dependent transport system permease family. CysTW subfamily. As to quaternary structure, the complex is composed of two ATP-binding proteins (CysA), two transmembrane proteins (CysT and CysW) and a solute-binding protein (CysP).

It localises to the cell inner membrane. Its function is as follows. Part of the ABC transporter complex CysAWTP (TC 3.A.1.6.1) involved in sulfate/thiosulfate import. Probably responsible for the translocation of the substrate across the membrane. The sequence is that of Sulfate transport system permease protein CysT (cysT) from Synechocystis sp. (strain ATCC 27184 / PCC 6803 / Kazusa).